The chain runs to 349 residues: Trans-enoyl reductase phmE (349 aa).

NADP(+) is bound at residue 55–58 (CDWK). Residue 143-150 (TGIGTMGL) coordinates substrate. NADP(+)-binding positions include 182-185 (SPKN), Y200, and 247-248 (LE). A substrate-binding site is contributed by 267–271 (GMAIL). 336–337 (VS) contributes to the NADP(+) binding site.

This sequence belongs to the zinc-containing alcohol dehydrogenase family. As to quaternary structure, monomer.

Its pathway is mycotoxin biosynthesis. In terms of biological role, trans-enoyl reductase; part of the gene cluster that mediates the biosynthesis of the mycotoxins phomacins, leucine-derived cytochalasans with potent actin polymerization-inhibitory activities and monocot-specific antigerminative activities. The first step in the pathway is catalyzed by the hybrid PKS-NRPS phmA, assisted by the enoyl reductase phmE, that are responsible for fusion of the leucine precursor and the polyketide backbone to produce a 2-pyrrolidone intermediate. The polyketide synthase module (PKS) of phmA is responsible for the synthesis of the polyketide backbone and the downstream nonribosomal peptide synthetase (NRPS) amidates the carboxyl end of the polyketide with the leucine precursor. Because phmA lacks a designated enoylreductase (ER) domain, the required activity is provided the enoyl reductase phmE. Reduction by the hydrolyase phmG, followed by dehydration and intra-molecular Diels-Alder cyclization by the Diels-Alderase phmD then yield the required isoindolone-fused macrocycle. A number of oxidative steps catalyzed by the tailoring cytochrome P450 monooxygenase phmB, the FAD-linked oxidoreductase phmC and the short-chain dehydrogenase/reductase phmF, are further required to afford the final products, phomacin D and phomacin E. The sequence is that of Trans-enoyl reductase phmE from Phaeosphaeria nodorum (strain SN15 / ATCC MYA-4574 / FGSC 10173) (Glume blotch fungus).